We begin with the raw amino-acid sequence, 206 residues long: Large ribosomal subunit protein uL4 (206 aa).

The protein belongs to the universal ribosomal protein uL4 family. In terms of assembly, part of the 50S ribosomal subunit.

In terms of biological role, one of the primary rRNA binding proteins, this protein initially binds near the 5'-end of the 23S rRNA. It is important during the early stages of 50S assembly. It makes multiple contacts with different domains of the 23S rRNA in the assembled 50S subunit and ribosome. Its function is as follows. Forms part of the polypeptide exit tunnel. This is Large ribosomal subunit protein uL4 from Rhodopseudomonas palustris (strain BisB5).